The following is a 338-amino-acid chain: Holliday junction branch migration complex subunit RuvB (338 aa).

A large ATPase domain (RuvB-L) region spans residues 4–184 (ADRLMSAAAV…FGIVQRLEFY (181 aa)). ATP contacts are provided by residues Ile-23, Arg-24, Gly-65, Lys-68, Thr-69, Thr-70, 131-133 (EDY), Arg-174, Tyr-184, and Arg-221. Thr-69 is a Mg(2+) binding site. The segment at 185–255 (QTGDLQHIVS…VAVSALNMLN (71 aa)) is small ATPAse domain (RuvB-S). Residues 258-338 (TEGFDFMDRK…GLEEHGGDPE (81 aa)) are head domain (RuvB-H). Positions 294, 313, and 318 each coordinate DNA.

This sequence belongs to the RuvB family. Homohexamer. Forms an RuvA(8)-RuvB(12)-Holliday junction (HJ) complex. HJ DNA is sandwiched between 2 RuvA tetramers; dsDNA enters through RuvA and exits via RuvB. An RuvB hexamer assembles on each DNA strand where it exits the tetramer. Each RuvB hexamer is contacted by two RuvA subunits (via domain III) on 2 adjacent RuvB subunits; this complex drives branch migration. In the full resolvosome a probable DNA-RuvA(4)-RuvB(12)-RuvC(2) complex forms which resolves the HJ.

It localises to the cytoplasm. The catalysed reaction is ATP + H2O = ADP + phosphate + H(+). In terms of biological role, the RuvA-RuvB-RuvC complex processes Holliday junction (HJ) DNA during genetic recombination and DNA repair, while the RuvA-RuvB complex plays an important role in the rescue of blocked DNA replication forks via replication fork reversal (RFR). RuvA specifically binds to HJ cruciform DNA, conferring on it an open structure. The RuvB hexamer acts as an ATP-dependent pump, pulling dsDNA into and through the RuvAB complex. RuvB forms 2 homohexamers on either side of HJ DNA bound by 1 or 2 RuvA tetramers; 4 subunits per hexamer contact DNA at a time. Coordinated motions by a converter formed by DNA-disengaged RuvB subunits stimulates ATP hydrolysis and nucleotide exchange. Immobilization of the converter enables RuvB to convert the ATP-contained energy into a lever motion, pulling 2 nucleotides of DNA out of the RuvA tetramer per ATP hydrolyzed, thus driving DNA branch migration. The RuvB motors rotate together with the DNA substrate, which together with the progressing nucleotide cycle form the mechanistic basis for DNA recombination by continuous HJ branch migration. Branch migration allows RuvC to scan DNA until it finds its consensus sequence, where it cleaves and resolves cruciform DNA. In Sodalis glossinidius (strain morsitans), this protein is Holliday junction branch migration complex subunit RuvB.